A 160-amino-acid chain; its full sequence is Cytochrome b6-f complex subunit 4 (160 aa).

Helical transmembrane passes span 36–56 (LLYM…GLAV), 95–115 (LLGV…PFIE), and 131–151 (TVFL…TLPI).

It belongs to the cytochrome b family. PetD subfamily. In terms of assembly, the 4 large subunits of the cytochrome b6-f complex are cytochrome b6, subunit IV (17 kDa polypeptide, petD), cytochrome f and the Rieske protein, while the 4 small subunits are petG, petL, petM and petN. The complex functions as a dimer.

The protein localises to the plastid. It localises to the chloroplast thylakoid membrane. Functionally, component of the cytochrome b6-f complex, which mediates electron transfer between photosystem II (PSII) and photosystem I (PSI), cyclic electron flow around PSI, and state transitions. The chain is Cytochrome b6-f complex subunit 4 from Nephroselmis olivacea (Green alga).